Here is a 109-residue protein sequence, read N- to C-terminus: Large ribosomal subunit protein uL22 (109 aa).

It belongs to the universal ribosomal protein uL22 family. Part of the 50S ribosomal subunit.

In terms of biological role, this protein binds specifically to 23S rRNA; its binding is stimulated by other ribosomal proteins, e.g. L4, L17, and L20. It is important during the early stages of 50S assembly. It makes multiple contacts with different domains of the 23S rRNA in the assembled 50S subunit and ribosome. The globular domain of the protein is located near the polypeptide exit tunnel on the outside of the subunit, while an extended beta-hairpin is found that lines the wall of the exit tunnel in the center of the 70S ribosome. In Dechloromonas aromatica (strain RCB), this protein is Large ribosomal subunit protein uL22.